The sequence spans 287 residues: Probable endonuclease LCL3 (287 aa).

The segment at 1 to 40 (MPWPFGPSGSSEAPPPQKPRDDKVEGREPAKSWNSLLPKP) is disordered. Over residues 18 to 30 (KPRDDKVEGREPA) the composition is skewed to basic and acidic residues. Residues 50–67 (WAPVFLTAVGSLAAFMFY) traverse the membrane as a helical segment. The region spanning 88–246 (RSLLGRVTSV…KAKKLGLWSI (159 aa)) is the TNase-like domain. R137 is an active-site residue. D142 is a binding site for Ca(2+). Active-site residues include E145 and R185. Residues 254-272 (PRDFKNRTQGNEKSERDVE) show a composition bias toward basic and acidic residues. The segment at 254–278 (PRDFKNRTQGNEKSERDVEGSTVQK) is disordered.

It belongs to the LCL3 family.

Its subcellular location is the mitochondrion. The protein localises to the membrane. The sequence is that of Probable endonuclease LCL3 (LCL3) from Verticillium alfalfae (strain VaMs.102 / ATCC MYA-4576 / FGSC 10136) (Verticillium wilt of alfalfa).